The sequence spans 113 residues: Urocortin-2 (113 aa).

The signal sequence occupies residues 1–23 (MMTRWALVVFVVLMLDRILFVPG). Residues 24-71 (TPIPTFQLLPQNSLETTPSSVTSESSSGTTTGPSASWSNSKASPYLDT) constitute a propeptide that is removed on maturation. Residues 37–61 (LETTPSSVTSESSSGTTTGPSASWS) are compositionally biased toward low complexity. The segment at 37–64 (LETTPSSVTSESSSGTTTGPSASWSNSK) is disordered. Residue Val-110 is modified to Valine amide; partial.

This sequence belongs to the sauvagine/corticotropin-releasing factor/urotensin I family. In terms of assembly, binds with high affinity to CRF receptors 2-alpha and 2-beta. Post-translationally, glycosylated.

It localises to the secreted. In terms of biological role, suppresses food intake, delays gastric emptying and decreases heat-induced edema. Might represent an endogenous ligand for maintaining homeostasis after stress. In Mus musculus (Mouse), this protein is Urocortin-2 (Ucn2).